The chain runs to 284 residues: Bifunctional protein FolD (284 aa).

Residues 166–168 (GAS) and isoleucine 232 contribute to the NADP(+) site.

This sequence belongs to the tetrahydrofolate dehydrogenase/cyclohydrolase family. As to quaternary structure, homodimer.

It catalyses the reaction (6R)-5,10-methylene-5,6,7,8-tetrahydrofolate + NADP(+) = (6R)-5,10-methenyltetrahydrofolate + NADPH. The enzyme catalyses (6R)-5,10-methenyltetrahydrofolate + H2O = (6R)-10-formyltetrahydrofolate + H(+). Its pathway is one-carbon metabolism; tetrahydrofolate interconversion. Catalyzes the oxidation of 5,10-methylenetetrahydrofolate to 5,10-methenyltetrahydrofolate and then the hydrolysis of 5,10-methenyltetrahydrofolate to 10-formyltetrahydrofolate. In Pseudoalteromonas translucida (strain TAC 125), this protein is Bifunctional protein FolD.